A 395-amino-acid polypeptide reads, in one-letter code: GPI-anchor transamidase (395 aa).

Positions 1–27 are cleaved as a signal peptide; the sequence is MAVTDSLSRAATVLATVLLLSFGSVAA. Residues 28–368 lie on the Lumenal side of the membrane; sequence SHIEDQAEQF…PKLKDWHPPG (341 aa). The Ca(2+) site is built by D79, I82, E118, and D120. H164 serves as the catalytic Proton donor. C206 functions as the Nucleophile; acyl-thioester intermediate in the catalytic mechanism. 3 residues coordinate a protein: C206, S232, and S234. An autoinhibitory loop region spans residues 231–236; it reads DSLSHQ. C275 and C280 form a disulfide bridge. Residues 369-385 form a helical membrane-spanning segment; the sequence is GFILGLWALIIMVFFKT. Topologically, residues 386–395 are cytoplasmic; it reads YGIKHMKFIF.

This sequence belongs to the peptidase C13 family. Heteropentamer. Part of the GPI-anchor transamidase complex, consisting of PIGK, PIGT, PIGS, PIGU and GAA1. Interacts with GPAA1. Interacts with PIGT; this interaction, via a disulfide link, stabilizes the expression of GAA1 and PIGK and links them to PIGS. In terms of processing, the disulfide bond between PIGK/GPI8 and PIGT is important for normal enzyme activity.

Its subcellular location is the endoplasmic reticulum membrane. It participates in glycolipid biosynthesis; glycosylphosphatidylinositol-anchor biosynthesis. Its activity is regulated as follows. In the absence of proproteins substrates, exists in an inactive state with a disrupted catalytic site by an autoinhibitory loop. The binding of proprotein substrates, particularly the CSP region, to GPI-T triggers concerted conformational changes that alleviate the inhibition by the autoinhibitory loop. Meanwhile, proprotein residues near the omega- site induce the formation of a catalytic cleft for catalysis, following which the products are released and GPI-T reverts to the inactive state. Catalytic subunit of the glycosylphosphatidylinositol-anchor (GPI-anchor) transamidase (GPI-T) complex that catalyzes the formation of the linkage between a proprotein and a GPI-anchor and participates in GPI anchored protein biosynthesis. Recognizes diverse proproteins at a C-terminal signal peptide (CSP) region that lacks consensus sequence and replaces it with a GPI-anchor via a transamidation reaction. Transamidation catalysis reaction follows a two-phase mechanism. In the acyl-enzyme phase, the carbonyl group of the proproteins's omega-site undergoes a nucleophilic attack forming an enzyme-substrate thioester bond. Followed by a general acid catalysis that allows CSP releasing, regenerating the carbonyl, and forming the acyl-enzyme intermediate. In the GPI-anchor attachment phase, the amino group of the GPI-anchor's ethanolamine phosphate, the one on third mannose (EtNP3), mediates a nucleophilic attack on the carbonyl of the acyl-enzyme intermediate, replacing the CSP, allowing GPI-anchor attachment to the omega-residue, therefore forming the product and freeing the enzyme. The chain is GPI-anchor transamidase from Homo sapiens (Human).